Consider the following 1108-residue polypeptide: MGSKGVYQYHWQSHNVKHSGVDDMVLLSKITENSIVENLKKRYMDDYIFTYIGSVLISVNPFKQMPYFGEKEIEMYQGAAQYENPPHIYALADNMYRNMIIDRENQCVIISGESGAGKTVAAKYIMSYISRVSGGGTKVQHVKDIILQSNPLLEAFGNAKTVRNNNSSRFGKYFEIQFSPGGEPDGGKISNFLLEKSRVVMRNPGERSFHIFYQLIEGASAEQKHSLGITSMDYYYYLSLSGSYKVDDIDDRREFQETLHAMNVIGIFAEEQTLVLQIVAGILHLGNISFKEVGNYAAVESEEFLAFPAYLLGINQDRLKEKLTSRQMDSKWGGKSESIHVTLNVEQACYTRDALAKALHARVFDFLVDSINKAMEKDHEEYNIGVLDIYGFEIFQKNGFEQFCINFVNEKLQQIFIELTLKAEQEEYVQEGIRWTPIEYFNNKIVCDLIENKVNPPGIMSILDDVCATMHAVGEGADQTLLQKLQMQIGSHEHFNSWNQGFIIHHYAGKVSYDMDGFCERNRDVLFMDLIELMQSSELPFIKSLFPENLQADKKGRPTTAGSKIKKQANDLVSTLMKCTPHYIRCIKPNETKKPRDWEESRVKHQVEYLGLKENIRVRRAGYAYRRIFQKFLQRYAILTKATWPSWQGEEKQGVLHLLQSVNMDSDQFQLGRSKVFIKAPESLFLLEEMRERKYDGYARVIQKSWRKFVARKKYVQMREEASDLLLNKKERRRNSINRNFIGDYIGMEEHPELQQFVGKREKIDFADTVTKYDRRFKGVKRDLLLTPKCLYLIGREKVKQGPDKGLVKEVLKRKIEIERILSVSLSTMQDDIFILHEQEYDSLLESVFKTEFLSLLAKRYEEKTQKQLPLKFSNTLELKLKKENWGPWSAGGSRQVQFHQGFGDLAVLKPSNKVLQVSIGPGLPKNSRPTRRNTTQNTGYSSGTQNANYPVRAAPPPPGYHQNGVIRNQYVPYPHAPGSQRSNQKSLYTSMARPPLPRQQSTSSDRVSQTPESLDFLKVPDQGAAGVRRQTTSRPPPAGGRPKPQPKPKPQVPQCKALYAYDAQDTDELSFNANDIIDIIKEDPSGWWTGRLRGKQGLFPNNYVTKI.

In terms of domain architecture, Myosin motor spans 19 to 692 (SGVDDMVLLS…SLFLLEEMRE (674 aa)). Residue 112-119 (GESGAGKT) participates in ATP binding. Residues 581–591 (PHYIRCIKPNE) form an actin-binding region. The IQ domain maps to 695 to 724 (YDGYARVIQKSWRKFVARKKYVQMREEASD). A TH1 domain is found at 730-922 (KERRRNSINR…NKVLQVSIGP (193 aa)). A disordered region spans residues 919-966 (SIGPGLPKNSRPTRRNTTQNTGYSSGTQNANYPVRAAPPPPGYHQNGV). The segment covering 933 to 949 (RNTTQNTGYSSGTQNAN) has biased composition (polar residues). Ser-980 and Ser-1002 each carry phosphoserine. The interval 993 to 1053 (ARPPLPRQQS…KPQPKPKPQV (61 aa)) is disordered. Polar residues predominate over residues 999–1013 (RQQSTSSDRVSQTPE). Positions 1035 to 1052 (RPPPAGGRPKPQPKPKPQ) are enriched in pro residues. In terms of domain architecture, SH3 spans 1051–1108 (PQVPQCKALYAYDAQDTDELSFNANDIIDIIKEDPSGWWTGRLRGKQGLFPNNYVTKI).

Belongs to the TRAFAC class myosin-kinesin ATPase superfamily. Myosin family. As to quaternary structure, interacts with CALM and F-actin. Interacts (via SH3 domain) with SYNJ1, DNM1 and DNM2. Interacts with ARL14EP. Interacts with CARMIL1. As to expression, expressed in the immune system. In the kidney, predominantly expressed in the glomerulus, including podocytes.

It is found in the cytoplasm. Its subcellular location is the cytoskeleton. The protein localises to the cytoplasmic vesicle. It localises to the clathrin-coated vesicle. The protein resides in the cell junction. Its function is as follows. Actin-based motor molecule with ATPase activity. Unconventional myosins serve in intracellular movements. Their highly divergent tails bind to membranous compartments, which are then moved relative to actin filaments. Binds to membranes containing anionic phospholipids via its tail domain. Involved in clathrin-mediated endocytosis and intracellular movement of clathrin-coated vesicles. Required for normal morphology of the glomerular basement membrane, normal development of foot processes by kidney podocytes and normal kidney function. In dendritic cells, may control the movement of class II-containing cytoplasmic vesicles along the actin cytoskeleton by connecting them with the actin network via ARL14EP and ARL14. The protein is Unconventional myosin-Ie (MYO1E) of Homo sapiens (Human).